Consider the following 247-residue polypeptide: D-alanyl-D-alanine dipeptidase (247 aa).

Positions 140 and 147 each coordinate Zn(2+). The active-site Proton donor/acceptor is E215. H218 provides a ligand contact to Zn(2+).

Belongs to the peptidase M15D family. It depends on Zn(2+) as a cofactor.

It localises to the cytoplasm. The catalysed reaction is D-alanyl-D-alanine + H2O = 2 D-alanine. Its function is as follows. Catalyzes hydrolysis of the D-alanyl-D-alanine dipeptide. May have a role in cell-wall turnover. This is D-alanyl-D-alanine dipeptidase from Synechocystis sp. (strain ATCC 27184 / PCC 6803 / Kazusa).